Consider the following 278-residue polypeptide: MTRPQRWTTAVLDVEADGGLAVVQGDQGFLLDSNGALFPRSWLRALDLPVQSEHGIGYFDGEPVYLLVLQHSVVVEGCAWQGLRQFMLEGDFAVFQMLGYAAQVATWAREHRFCGACGRATVQIAGERAMYCEHDNLRLYPRISPSMIVLVTRGDEVLLARSPRFVSGMYSALAGFVEPGESAEDCVHREVMEEVQVRIKNLKYMGSQCWPFPHSMMLGFHAQYAGGDIVPQVDEIEDARWFHIDDLPPLPANRSIARYLIEAYLAERSGAPEPVLPG.

Position 84 (R84) interacts with substrate. C114 and C117 together coordinate Zn(2+). Residue E127 participates in substrate binding. C132 contributes to the Zn(2+) binding site. Y140 provides a ligand contact to substrate. Positions 141–264 (PRISPSMIVL…SIARYLIEAY (124 aa)) constitute a Nudix hydrolase domain. A divalent metal cation is bound by residues A174, E190, and E194. The short motif at 175-196 (GFVEPGESAEDCVHREVMEEVQ) is the Nudix box element. 208–215 (QCWPFPHS) provides a ligand contact to substrate. E235 is an a divalent metal cation binding site. A substrate-binding site is contributed by A257.

The protein belongs to the Nudix hydrolase family. NudC subfamily. In terms of assembly, homodimer. It depends on Mg(2+) as a cofactor. Requires Mn(2+) as cofactor. Zn(2+) is required as a cofactor.

It carries out the reaction a 5'-end NAD(+)-phospho-ribonucleoside in mRNA + H2O = a 5'-end phospho-adenosine-phospho-ribonucleoside in mRNA + beta-nicotinamide D-ribonucleotide + 2 H(+). The catalysed reaction is NAD(+) + H2O = beta-nicotinamide D-ribonucleotide + AMP + 2 H(+). It catalyses the reaction NADH + H2O = reduced beta-nicotinamide D-ribonucleotide + AMP + 2 H(+). Its function is as follows. mRNA decapping enzyme that specifically removes the nicotinamide adenine dinucleotide (NAD) cap from a subset of mRNAs by hydrolyzing the diphosphate linkage to produce nicotinamide mononucleotide (NMN) and 5' monophosphate mRNA. The NAD-cap is present at the 5'-end of some mRNAs and stabilizes RNA against 5'-processing. Has preference for mRNAs with a 5'-end purine. Catalyzes the hydrolysis of a broad range of dinucleotide pyrophosphates. This is NAD-capped RNA hydrolase NudC from Pseudomonas syringae pv. tomato (strain ATCC BAA-871 / DC3000).